The chain runs to 814 residues: Kinesin-like protein KIF6 (814 aa).

The Kinesin motor domain maps to 5–345 (TIQIFARVKP…CRFAQRVALI (341 aa)). Residue 97-104 (GQTGSGKT) coordinates ATP. Coiled coils occupy residues 356-385 (NPRLVIKRLQKEIQELKDELAMVTGEQRTE), 456-494 (LKEEEYRKLRDILKQRDNEINILVNMLKKEKKKAQEALH), and 588-683 (EAKA…KEFE). Residues 752–788 (LPSPCPSPHSQKQSSTSTPLEDSIPKRPVSSIPLTGD) are disordered. Over residues 759–771 (PHSQKQSSTSTPL) the composition is skewed to polar residues.

The protein belongs to the TRAFAC class myosin-kinesin ATPase superfamily. Kinesin family.

The protein localises to the cytoplasm. Its subcellular location is the cytoskeleton. In Homo sapiens (Human), this protein is Kinesin-like protein KIF6 (KIF6).